We begin with the raw amino-acid sequence, 82 residues long: Small ribosomal subunit protein uS17 (82 aa).

Belongs to the universal ribosomal protein uS17 family. In terms of assembly, part of the 30S ribosomal subunit.

Its function is as follows. One of the primary rRNA binding proteins, it binds specifically to the 5'-end of 16S ribosomal RNA. The protein is Small ribosomal subunit protein uS17 of Thermosynechococcus vestitus (strain NIES-2133 / IAM M-273 / BP-1).